The chain runs to 470 residues: GTPase grn1 (470 aa).

The span at methionine 1–arginine 16 shows a compositional bias: basic residues. The interval methionine 1–tyrosine 56 is disordered. Over residues serine 17–lysine 27 the composition is skewed to basic and acidic residues. The CP-type G domain occupies aspartate 153 to proline 333. Residues asparagine 202 to aspartate 205, glycine 276 to serine 283, and aspartate 326 to glycine 329 contribute to the GTP site. Residues alanine 405–glycine 415 form an RNA-binding region.

The protein belongs to the TRAFAC class YlqF/YawG GTPase family.

It localises to the nucleus. It is found in the nucleolus. Functionally, required for optimal growth. Required for normal processing of ribosomal pre-rRNA. Required for nuclear export of ribosomal protein rpl2501. In Schizosaccharomyces pombe (strain 972 / ATCC 24843) (Fission yeast), this protein is GTPase grn1.